The primary structure comprises 242 residues: DNA repair protein RecO (242 aa).

It belongs to the RecO family.

In terms of biological role, involved in DNA repair and RecF pathway recombination. The protein is DNA repair protein RecO of Paracoccus denitrificans (strain Pd 1222).